Here is a 156-residue protein sequence, read N- to C-terminus: Endoribonuclease YbeY (156 aa).

The Zn(2+) site is built by H122, H126, and H132.

Belongs to the endoribonuclease YbeY family. Requires Zn(2+) as cofactor.

The protein localises to the cytoplasm. In terms of biological role, single strand-specific metallo-endoribonuclease involved in late-stage 70S ribosome quality control and in maturation of the 3' terminus of the 16S rRNA. This Moorella thermoacetica (strain ATCC 39073 / JCM 9320) protein is Endoribonuclease YbeY.